The sequence spans 266 residues: Mediator of RNA polymerase II transcription subunit 18 (266 aa).

Belongs to the Mediator complex subunit 18 family. Component of the Mediator complex.

It is found in the nucleus. Its function is as follows. Component of the Mediator complex, a coactivator involved in the regulated transcription of nearly all RNA polymerase II-dependent genes. Mediator functions as a bridge to convey information from gene-specific regulatory proteins to the basal RNA polymerase II transcription machinery. Mediator is recruited to promoters by direct interactions with regulatory proteins and serves as a scaffold for the assembly of a functional preinitiation complex with RNA polymerase II and the general transcription factors. This Candida glabrata (strain ATCC 2001 / BCRC 20586 / JCM 3761 / NBRC 0622 / NRRL Y-65 / CBS 138) (Yeast) protein is Mediator of RNA polymerase II transcription subunit 18 (SRB5).